The chain runs to 339 residues: MRVYYDRDADLNLIKSKKVAIIGYGSQGRAHALNLKDSGAQNVAIALKSGSATAKKAEADGFKVMTVAEAAAWADLMMMATPDELQADIYKAEIAGNIRDGAAIAFAHGLNVHFGLIEPKASVDVVMIAPKGPGHTVRGEYQKGGGVPCLVAVHQNASGNALDLALSYACGVGGGRSGIIETNFKEECETDLFGEQVVLCGGLVELIRAGFETLVEAGYAPEMAYFECLHEVKLIVDLIYEGGIANMNYSISNTAEWGEYVTGPRIITDETKAEMKRVLKDIQTGKFTSEWMQEYRSGAARFKGIRRVNDAHQIEEVGAKLRGMMPWIGKNKLVDKAKN.

A KARI N-terminal Rossmann domain is found at 1–182 (MRVYYDRDAD…GGGRSGIIET (182 aa)). Residues 24–27 (YGSQ), Lys48, Ser51, Thr53, and 83–86 (DELQ) contribute to the NADP(+) site. Residue His108 is part of the active site. Gly134 is a binding site for NADP(+). A KARI C-terminal knotted domain is found at 183–328 (NFKEECETDL…AKLRGMMPWI (146 aa)). The Mg(2+) site is built by Asp191, Glu195, Glu227, and Glu231. Residue Ser252 participates in substrate binding.

It belongs to the ketol-acid reductoisomerase family. Mg(2+) serves as cofactor.

The enzyme catalyses (2R)-2,3-dihydroxy-3-methylbutanoate + NADP(+) = (2S)-2-acetolactate + NADPH + H(+). It catalyses the reaction (2R,3R)-2,3-dihydroxy-3-methylpentanoate + NADP(+) = (S)-2-ethyl-2-hydroxy-3-oxobutanoate + NADPH + H(+). Its pathway is amino-acid biosynthesis; L-isoleucine biosynthesis; L-isoleucine from 2-oxobutanoate: step 2/4. The protein operates within amino-acid biosynthesis; L-valine biosynthesis; L-valine from pyruvate: step 2/4. Functionally, involved in the biosynthesis of branched-chain amino acids (BCAA). Catalyzes an alkyl-migration followed by a ketol-acid reduction of (S)-2-acetolactate (S2AL) to yield (R)-2,3-dihydroxy-isovalerate. In the isomerase reaction, S2AL is rearranged via a Mg-dependent methyl migration to produce 3-hydroxy-3-methyl-2-ketobutyrate (HMKB). In the reductase reaction, this 2-ketoacid undergoes a metal-dependent reduction by NADPH to yield (R)-2,3-dihydroxy-isovalerate. In Sinorhizobium fredii (strain NBRC 101917 / NGR234), this protein is Ketol-acid reductoisomerase (NADP(+)).